The sequence spans 172 residues: Peptide methionine sulfoxide reductase MsrA 2 (172 aa).

Cysteine 12 is an active-site residue.

This sequence belongs to the MsrA Met sulfoxide reductase family.

It catalyses the reaction L-methionyl-[protein] + [thioredoxin]-disulfide + H2O = L-methionyl-(S)-S-oxide-[protein] + [thioredoxin]-dithiol. It carries out the reaction [thioredoxin]-disulfide + L-methionine + H2O = L-methionine (S)-S-oxide + [thioredoxin]-dithiol. Its function is as follows. Has an important function as a repair enzyme for proteins that have been inactivated by oxidation. Catalyzes the reversible oxidation-reduction of methionine sulfoxide in proteins to methionine. The polypeptide is Peptide methionine sulfoxide reductase MsrA 2 (msrA2) (Lactococcus lactis subsp. lactis (strain IL1403) (Streptococcus lactis)).